The sequence spans 781 residues: DEAD-box ATP-dependent RNA helicase 50 (781 aa).

Disordered regions lie at residues 72 to 103 (EFAP…LTAS), 117 to 148 (GKVT…DEGF), 166 to 240 (IPRS…KGDR), 254 to 292 (GRAI…REDR), and 313 to 342 (YNPR…RGWG). Over residues 79-88 (SDLLSSIPSE) the composition is skewed to low complexity. The span at 130-143 (EEEDEDDASDENYS) shows a compositional bias: acidic residues. Residues 171 to 197 (KSAERNEVKRASKVRESRESRRDLDRL) show a composition bias toward basic and acidic residues. The segment covering 198–208 (EGDDEDVDEVS) has biased composition (acidic residues). A compositionally biased stretch (polar residues) spans 216 to 226 (NQRAGSRSSYS). Residues 254–274 (GRAIDEVSNPRKFNDNERAES) are compositionally biased toward basic and acidic residues. The segment covering 275-286 (RSSYSRDSSANS) has biased composition (low complexity). Residues 313 to 325 (YNPRRFTDNERGL) are compositionally biased toward basic and acidic residues. Positions 374–402 (KTFAEIGCSEDMMKALKEQNFDRPAHIQA) match the Q motif motif. The region spanning 405 to 586 (FSPVIDGKSC…VEVFPDCEVV (182 aa)) is the Helicase ATP-binding domain. Residue 418-425 (DQSGSGKT) coordinates ATP. The DEAD box signature appears at 533-536 (DEVD). The Helicase C-terminal domain maps to 621 to 781 (NKKTALLQIM…DVPNAYEFTT (161 aa)).

It belongs to the DEAD box helicase family.

It carries out the reaction ATP + H2O = ADP + phosphate + H(+). Functionally, probably involved in resistance to biotic and abiotic stresses. In Arabidopsis thaliana (Mouse-ear cress), this protein is DEAD-box ATP-dependent RNA helicase 50 (RH50).